We begin with the raw amino-acid sequence, 114 residues long: Probable 4-amino-4-deoxy-L-arabinose-phosphoundecaprenol flippase subunit ArnE (114 aa).

A run of 3 helical transmembrane segments spans residues 41–61 (PWLI…IYLL), 64–84 (LPLS…LIGS), and 94–114 (YHNW…GGLL). The 60-residue stretch at 53–112 (GMLLWIYLLQRLPLSMAYPMLSINLVLVLIGSRLFFHEQISYHNWLGAGAIIIGALLLGG) folds into the EamA domain.

It belongs to the ArnE family. Heterodimer of ArnE and ArnF.

The protein localises to the cell inner membrane. Its pathway is bacterial outer membrane biogenesis; lipopolysaccharide biosynthesis. In terms of biological role, translocates 4-amino-4-deoxy-L-arabinose-phosphoundecaprenol (alpha-L-Ara4N-phosphoundecaprenol) from the cytoplasmic to the periplasmic side of the inner membrane. In Aeromonas salmonicida (strain A449), this protein is Probable 4-amino-4-deoxy-L-arabinose-phosphoundecaprenol flippase subunit ArnE.